Reading from the N-terminus, the 207-residue chain is GTP-binding protein Rheb homolog 1 (207 aa).

Residues Gly25, Lys26, Ser27, Tyr42, Thr45, Asn126, Asp129, and Ala157 each coordinate GTP. Residue Ser27 participates in Mg(2+) binding. Positions Tyr42–His50 match the Effector region motif. Thr45 contacts Mg(2+). The span at Asn180–Lys193 shows a compositional bias: polar residues. The interval Asn180–Ser207 is disordered. The span at Pro196–Ser207 shows a compositional bias: basic and acidic residues. Cys204 is modified (cysteine methyl ester). Cys204 is lipidated: S-farnesyl cysteine. The propeptide at Ser205–Ser207 is removed in mature form.

Belongs to the small GTPase superfamily. Rheb family.

The protein localises to the cell membrane. The catalysed reaction is GTP + H2O = GDP + phosphate + H(+). Functionally, binds GTP and exhibits intrinsic GTPase activity. This chain is GTP-binding protein Rheb homolog 1 (rheb-1), found in Caenorhabditis elegans.